Consider the following 353-residue polypeptide: Guanine nucleotide-binding protein G(q) subunit alpha (353 aa).

2 S-palmitoyl cysteine lipidation sites follow: Cys-3 and Cys-4. The G-alpha domain occupies 32–353; the sequence is RELKLLLLGT…QLNLKEYNLV (322 aa). The tract at residues 35 to 48 is G1 motif; sequence KLLLLGTGESGKST. GTP is bound by residues 40–47, 174–180, 199–203, 268–271, and Ala-325; these read GTGESGKS, LRVRAPT, DVGGQ, and NKKD. Mg(2+)-binding residues include Ser-47 and Thr-180. A G2 motif region spans residues 172-180; the sequence is DILRVRAPT. A G3 motif region spans residues 195–204; the sequence is FRMVDVGGQR. Positions 264–271 are G4 motif; the sequence is ILFLNKKD. A G5 motif region spans residues 323 to 328; sequence TCATDT.

Belongs to the G-alpha family. G(q) subfamily. As to quaternary structure, g proteins are composed of 3 units; alpha, beta and gamma. The alpha chain contains the guanine nucleotide binding site.

Its function is as follows. Guanine nucleotide-binding proteins (G proteins) are involved as modulators or transducers in various transmembrane signaling systems. In Homarus americanus (American lobster), this protein is Guanine nucleotide-binding protein G(q) subunit alpha.